The primary structure comprises 450 residues: C4-dicarboxylate transport protein (450 aa).

Helical transmembrane passes span 25 to 45 (VVFAIIIGVLLGHFQPEYGAA), 56 to 76 (LIKMIIAPVIFLTIVTGIASM), 90 to 110 (MAYFLTFSTLALVVGLVVANV), 162 to 182 (ILQVLLVAVLFGVSLAMVGDA), 200 to 220 (LVNIVMKAAPIGAFGAMAFTI), 234 to 254 (LVLTFYITSAVFVLVVLGAVA), 319 to 339 (IYMTLAALFIAQATDTHLTLG), and 367 to 387 (AATLAVVPEVPVAGMALILGV).

The protein belongs to the dicarboxylate/amino acid:cation symporter (DAACS) (TC 2.A.23) family.

Its subcellular location is the cell inner membrane. Responsible for the transport of dicarboxylates such as succinate, fumarate, and malate from the periplasm across the membrane. The polypeptide is C4-dicarboxylate transport protein (Acidovorax ebreus (strain TPSY) (Diaphorobacter sp. (strain TPSY))).